Consider the following 546-residue polypeptide: MATVAAAARGAGARAAAGLRSCGGAVARERPRSGCARRLCSAPAAPAAVDMKSYLWARYHEAKRSTDELVPSIMNNLLNPDAIFSNNEMSLSDIEIYGFDYDYTLVFYSKHLHTLIFNAARDLLINEHRYPVEIRKYEYDPSFAIRGLHYDVQRAVLMKIDAFHYIQMGTVYRGLSVVPDEEVIDMYEGSHVPLEQMSDFYGKSSHGNTMKQFMDIFSLPEMTLLSCVNEHFLKNNIDYEPVHLYKDVKDSIRDVHIKGIMYRAIEADIEKYICYADQTRAVLAKLAAHGKKMFLITNSPSSFVDKGMRYIVGKDWRDLFDVVIVQAEKPNFFNDKRRPFRKVNEKGVLLWDKIHKLQKGQIYKQGNLYEFLKLTGWRGSKVLYFGDHIYSDLADLTLKHGWRTGAIIPELRSELRIMNTEQYIQTMTWLQTLTGLLEQMQVHRDAESQLVLQEWKKERKEMREMTKSFFNAQFGSLFRTDQNPTYFLRRLSRFADIYMASLSCLLNYDVHHTFYPRRTPLQHELPAWSDSPSAFKAPLLQEAQAK.

Asp100 (nucleophile) is an active-site residue. Mg(2+) contacts are provided by Asp100 and Asp102. The active-site Proton donor is Asp102. 249 to 257 serves as a coordination point for substrate; the sequence is KDSIRDVHI. Residue Asp387 participates in Mg(2+) binding.

Belongs to the 5'(3')-deoxyribonucleotidase family. It depends on Mg(2+) as a cofactor.

The protein is 5'-nucleotidase domain-containing protein 3 (Nt5dc3) of Mus musculus (Mouse).